A 292-amino-acid polypeptide reads, in one-letter code: UPF0725 protein At4g28920 (292 aa).

A compositionally biased stretch (acidic residues) spans 1 to 17; sequence MSENDSSESDIEMDPEE. The segment at 1–24 is disordered; it reads MSENDSSESDIEMDPEEEKVYRRQ.

Belongs to the UPF0725 (EMB2204) family.

The sequence is that of UPF0725 protein At4g28920 from Arabidopsis thaliana (Mouse-ear cress).